We begin with the raw amino-acid sequence, 235 residues long: Large ribosomal subunit protein uL1 (235 aa).

This sequence belongs to the universal ribosomal protein uL1 family. Part of the 50S ribosomal subunit.

Binds directly to 23S rRNA. The L1 stalk is quite mobile in the ribosome, and is involved in E site tRNA release. In terms of biological role, protein L1 is also a translational repressor protein, it controls the translation of the L11 operon by binding to its mRNA. In Thermobifida fusca (strain YX), this protein is Large ribosomal subunit protein uL1.